Consider the following 839-residue polypeptide: uncharacterized protein (839 aa).

Disordered stretches follow at residues 504 to 611 (TVSP…NVVN), 627 to 646 (KNNNSSSNDNEYKNSNDNHC), and 682 to 839 (NHNY…SLGS). The span at 509-611 (GNNNVTGDVD…EGSNNCNVVN (103 aa)) shows a compositional bias: low complexity. Residues 636–646 (NEYKNSNDNHC) show a composition bias toward basic and acidic residues. 2 stretches are compositionally biased toward low complexity: residues 689 to 704 (NGNNENDCKNNNNNNN) and 713 to 753 (QQQP…NNNK). Positions 726–764 (QQSQQQPQLQQKKQQIQEEQQNLNNNNKSIEDDEEAFNS) form a coiled coil. The segment covering 765-776 (DDEHDHEDDSIR) has biased composition (basic and acidic residues). Positions 809–823 (EDNDDDSDISDSDSD) are enriched in acidic residues.

This is an uncharacterized protein from Dictyostelium discoideum (Social amoeba).